The chain runs to 551 residues: Putative transport protein CGSHiEE_03135 (551 aa).

A run of 5 helical transmembrane segments spans residues 4 to 24 (IAITISLLALVAVIGLWIGHW), 28 to 48 (GVGLGIGGVLFGGIIVAHFTD), 65 to 85 (FGLILFVYTIGIQVGPGFFSS), 95 to 115 (AFAILIIVLGSIAVVLVHKIA), and 157 to 177 (VSYAMAYPFGICGILLAMWLI). RCK C-terminal domains follow at residues 191-275 (RFNA…IIGY) and 277-360 (VDAP…VIGN). 6 helical membrane passes run 370 to 390 (MLPVFIGIGLGVLVGSIPFYI), 402 to 424 (AGGPLVVVLILARIGTIGKLYWF), 438 to 458 (IVLFLAVVGLKSGGSFFDTLV), 463 to 483 (LEWMGYGIFITFVPLIIAGTI), 492 to 512 (YLTICGLLAGSMTDPPALAFA), and 529 to 549 (VYPLVMFLRIMSPQLLAVLLW).

The protein belongs to the AAE transporter (TC 2.A.81) family. YidE subfamily.

It is found in the cell membrane. The chain is Putative transport protein CGSHiEE_03135 from Haemophilus influenzae (strain PittEE).